Here is a 331-residue protein sequence, read N- to C-terminus: Olfactory receptor 7E178 (331 aa).

Over 1 to 47 (MMDRYSFIMHQHRDDTVWCPSKIEEQNITRISEFHLMGLSDDLQLQP) the chain is Extracellular. The N-linked (GlcNAc...) asparagine glycan is linked to Asn27. The chain crosses the membrane as a helical span at residues 48-68 (ILFGLFLSMYLVTLLGNLLII). Topologically, residues 69-80 (LTVSSDSHLHSP) are cytoplasmic. A helical transmembrane segment spans residues 81 to 100 (MYFFLSNLSLADVSFTSTTL). Residues 101 to 119 (PKMIVDIQTHNRAISYSGC) lie on the Extracellular side of the membrane. Cys119 and Cys201 are disulfide-bonded. A helical membrane pass occupies residues 120–140 (LTQMSFFMLFGCLDSLLLTAM). Topologically, residues 141–164 (AYDRFVAICHPLHYQFIMNPRLCG) are cytoplasmic. The chain crosses the membrane as a helical span at residues 165-185 (LLVFLSVLISLFVSQLHNSVV). Over 186 to 218 (LQLTYFKSVDISHFFCDPSQLLNLACSDTFTNN) the chain is Extracellular. The helical transmembrane segment at 219 to 239 (IVMYFVGAISGFLPISGIFFS) threads the bilayer. At 240–266 (YYKIVSSILRMPSPGGKYKAFSTCGSH) the chain is on the cytoplasmic side. The helical transmembrane segment at 267-287 (LSVVCLFYGTGLGVYLSSAVS) threads the bilayer. The Extracellular segment spans residues 288–293 (LSPRKG). Residues 294–314 (AVASIVYTVVTPMLNPFIYSL) form a helical membrane-spanning segment. Residues 315-331 (RNQDIKRAMWRLLRKTV) lie on the Cytoplasmic side of the membrane.

It belongs to the G-protein coupled receptor 1 family.

The protein resides in the cell membrane. Its function is as follows. Odorant receptor. This is Olfactory receptor 7E178 from Mus musculus (Mouse).